Here is a 279-residue protein sequence, read N- to C-terminus: Dermonecrotic toxin LspiSicTox-betaIE3i (279 aa).

Residue H5 is part of the active site. Mg(2+) contacts are provided by E25 and D27. The active-site Nucleophile is the H41. 2 disulfide bridges follow: C45-C51 and C47-C190. D85 provides a ligand contact to Mg(2+).

It belongs to the arthropod phospholipase D family. Class II subfamily. It depends on Mg(2+) as a cofactor. As to expression, expressed by the venom gland.

It localises to the secreted. The catalysed reaction is an N-(acyl)-sphingosylphosphocholine = an N-(acyl)-sphingosyl-1,3-cyclic phosphate + choline. It carries out the reaction an N-(acyl)-sphingosylphosphoethanolamine = an N-(acyl)-sphingosyl-1,3-cyclic phosphate + ethanolamine. It catalyses the reaction a 1-acyl-sn-glycero-3-phosphocholine = a 1-acyl-sn-glycero-2,3-cyclic phosphate + choline. The enzyme catalyses a 1-acyl-sn-glycero-3-phosphoethanolamine = a 1-acyl-sn-glycero-2,3-cyclic phosphate + ethanolamine. In terms of biological role, dermonecrotic toxins cleave the phosphodiester linkage between the phosphate and headgroup of certain phospholipids (sphingolipid and lysolipid substrates), forming an alcohol (often choline) and a cyclic phosphate. This toxin acts on sphingomyelin (SM). It may also act on ceramide phosphoethanolamine (CPE), lysophosphatidylcholine (LPC) and lysophosphatidylethanolamine (LPE), but not on lysophosphatidylserine (LPS), and lysophosphatidylglycerol (LPG). It acts by transphosphatidylation, releasing exclusively cyclic phosphate products as second products. Induces dermonecrosis, hemolysis, increased vascular permeability, edema, inflammatory response, and platelet aggregation. This Loxosceles spinulosa (Recluse spider) protein is Dermonecrotic toxin LspiSicTox-betaIE3i.